The sequence spans 690 residues: Eukaryotic translation initiation factor 3 subunit B (690 aa).

Positions 1–37 are disordered; that stretch reads MAKKKSEEQSSADANDSDYQEEPNFEDPPGFVDNISD. The span at 15–25 shows a compositional bias: acidic residues; that stretch reads NDSDYQEEPNF. Residues 57 to 141 enclose the RRM domain; sequence SVVVVDNIPK…HTFAVNLFTD (85 aa). WD repeat units lie at residues 207 to 246, 293 to 331, 334 to 369, 442 to 484, and 530 to 575; these read TRER…KIQK, DGMS…LLDL, IKIP…TLME, EIRE…KPSL, and PDHF…IKRT. Residues 595-645 adopt a coiled-coil conformation; the sequence is EEKQKEIKKNLKKYYAAFEQKDRLRLTRASKELLEKRSQLRETFMEYRNKR.

This sequence belongs to the eIF-3 subunit B family. In terms of assembly, component of the eukaryotic translation initiation factor 3 (eIF-3) complex. The eIF-3 complex interacts with pix. Interacts with mxt.

The protein localises to the cytoplasm. Functionally, RNA-binding component of the eukaryotic translation initiation factor 3 (eIF-3) complex, which is involved in protein synthesis of a specialized repertoire of mRNAs and, together with other initiation factors, stimulates binding of mRNA and methionyl-tRNAi to the 40S ribosome. The eIF-3 complex specifically targets and initiates translation of a subset of mRNAs involved in cell proliferation. The protein is Eukaryotic translation initiation factor 3 subunit B of Drosophila sechellia (Fruit fly).